We begin with the raw amino-acid sequence, 275 residues long: Formamidopyrimidine-DNA glycosylase (275 aa).

Residue Pro-2 is the Schiff-base intermediate with DNA of the active site. Residue Glu-3 is the Proton donor of the active site. Lys-58 functions as the Proton donor; for beta-elimination activity in the catalytic mechanism. DNA is bound by residues His-91, Arg-109, and Lys-154. The FPG-type zinc finger occupies 240–274; the sequence is AVYERAGLACRVCGTPIRRLVQGQRATYFCPHCQK. Arg-264 serves as the catalytic Proton donor; for delta-elimination activity.

It belongs to the FPG family. As to quaternary structure, monomer. Zn(2+) is required as a cofactor.

The enzyme catalyses Hydrolysis of DNA containing ring-opened 7-methylguanine residues, releasing 2,6-diamino-4-hydroxy-5-(N-methyl)formamidopyrimidine.. The catalysed reaction is 2'-deoxyribonucleotide-(2'-deoxyribose 5'-phosphate)-2'-deoxyribonucleotide-DNA = a 3'-end 2'-deoxyribonucleotide-(2,3-dehydro-2,3-deoxyribose 5'-phosphate)-DNA + a 5'-end 5'-phospho-2'-deoxyribonucleoside-DNA + H(+). Functionally, involved in base excision repair of DNA damaged by oxidation or by mutagenic agents. Acts as a DNA glycosylase that recognizes and removes damaged bases. Has a preference for oxidized purines, such as 7,8-dihydro-8-oxoguanine (8-oxoG). Has AP (apurinic/apyrimidinic) lyase activity and introduces nicks in the DNA strand. Cleaves the DNA backbone by beta-delta elimination to generate a single-strand break at the site of the removed base with both 3'- and 5'-phosphates. This Bordetella avium (strain 197N) protein is Formamidopyrimidine-DNA glycosylase.